A 5541-amino-acid polypeptide reads, in one-letter code: Malpibaldin synthetase (5541 aa).

Residues 1 to 13 show a composition bias toward basic and acidic residues; that stretch reads MGDKRPDGIKSAE. Positions 1–26 are disordered; the sequence is MGDKRPDGIKSAESHGQPSAPFGAEN. Residues 137 to 378 form a condensation 1 region; sequence KEDDIARDES…IDIISPAEKT (242 aa). The segment at 401–799 is adenylation 1; sequence FEEQVDKSPD…GRNDDQVKIR (399 aa). Residues 901 to 975 form the Carrier 1 domain; the sequence is VPCGETEDAI…VLAQDLSKHQ (75 aa). S936 carries the O-(pantetheine 4'-phosphoryl)serine modification. Residues 1021-1469 are dual epimerase/condensation (E/C) domain 1; it reads QDVYSLAPLQ…LPLDERTKLL (449 aa). Residues 1489-1899 form an adenylation 2 region; sequence FEQQVKQSPI…GRNDDQIKIR (411 aa). The Carrier 2 domain occupies 2001 to 2075; sequence SPQGRIECAL…SFAQAFKGQL (75 aa). An O-(pantetheine 4'-phosphoryl)serine modification is found at S2036. The condensation 2 stretch occupies residues 2095 to 2537; that stretch reads ELSFSQQRLW…LGSTEEELLL (443 aa). The segment at 2557–2956 is adenylation 3; that stretch reads FEDQVERSPD…GRNDDQVKIR (400 aa). In terms of domain architecture, Carrier 3 spans 3058-3132; it reads EPQGEVEMKL…VLAASITRGC (75 aa). S3093 is subject to O-(pantetheine 4'-phosphoryl)serine. Positions 3182 to 3616 are dual epimerase/condensation (E/C) domain 2; the sequence is QDIYSLSPLQ…VIPAEEHDLL (435 aa). The interval 3637 to 4038 is adenylation 4; that stretch reads FENQVRERPE…GRNDEQVKIR (402 aa). Residues 4140-4214 form the Carrier 4 domain; sequence APRGDIEISL…VLAASLNTHQ (75 aa). S4175 carries the post-translational modification O-(pantetheine 4'-phosphoryl)serine. The segment at 4260–4695 is dual epimerase/condensation (E/C) domain 3; sequence VQDVYSLSPL…VIPAEEHDLL (436 aa). Positions 4716 to 5117 are adenylation 5; it reads FENQVRERPE…GRNDEQVKIR (402 aa). The Carrier 5 domain occupies 5219–5294; it reads LPSGDVEIGL…ELAQKLVQGG (76 aa). S5254 is modified (O-(pantetheine 4'-phosphoryl)serine). The interval 5315–5523 is thioesterase (TE) domain; it reads PLFCIHSGLG…VECTHIEMDK (209 aa).

Belongs to the NRP synthetase family.

Functionally, nonribosomal peptide synthetase that catalyzes the biosynthesis of the hydrophobic cyclopentapeptides malpibaldins, natural products that show biosurfactant activities. Module 3 shows promiscuous adenylation (accepting either Trp, Phe or Tyr) leading to the parallel production of multiple products from one NRPS assembly line, including malpibaldin A corresponding to cyclo(-L-Leu-D-Leu-D-Phe-L-Leu-D-Val-), malpibaldin B corresponding to cyclo(-L-Leu-D-Leu-D-Tyr-L-Leu-D-Val-) and malpibaldin C corresponding to cyclo(-Leu-Leu-Trp-Leu-Val-). The sequence is that of Malpibaldin synthetase from Mortierella alpina (Oleaginous fungus).